A 459-amino-acid polypeptide reads, in one-letter code: Siroheme synthase 2 (459 aa).

A precorrin-2 dehydrogenase /sirohydrochlorin ferrochelatase region spans residues 1 to 204 (MDYLPIFCQL…EDRERVQQLT (204 aa)). NAD(+) is bound by residues 22 to 23 (EI) and 43 to 44 (LD). A Phosphoserine modification is found at Ser128. Residues 216–459 (GEVTLVGAGP…KLSWFSDQTA (244 aa)) form a uroporphyrinogen-III C-methyltransferase region. Pro225 provides a ligand contact to S-adenosyl-L-methionine. Asp248 serves as the catalytic Proton acceptor. Lys270 (proton donor) is an active-site residue. S-adenosyl-L-methionine is bound by residues 301-303 (GGD), Ile306, 331-332 (TA), Met382, and Gly411.

It in the N-terminal section; belongs to the precorrin-2 dehydrogenase / sirohydrochlorin ferrochelatase family. In the C-terminal section; belongs to the precorrin methyltransferase family.

It carries out the reaction uroporphyrinogen III + 2 S-adenosyl-L-methionine = precorrin-2 + 2 S-adenosyl-L-homocysteine + H(+). The enzyme catalyses precorrin-2 + NAD(+) = sirohydrochlorin + NADH + 2 H(+). The catalysed reaction is siroheme + 2 H(+) = sirohydrochlorin + Fe(2+). It participates in cofactor biosynthesis; adenosylcobalamin biosynthesis; precorrin-2 from uroporphyrinogen III: step 1/1. Its pathway is cofactor biosynthesis; adenosylcobalamin biosynthesis; sirohydrochlorin from precorrin-2: step 1/1. The protein operates within porphyrin-containing compound metabolism; siroheme biosynthesis; precorrin-2 from uroporphyrinogen III: step 1/1. It functions in the pathway porphyrin-containing compound metabolism; siroheme biosynthesis; siroheme from sirohydrochlorin: step 1/1. It participates in porphyrin-containing compound metabolism; siroheme biosynthesis; sirohydrochlorin from precorrin-2: step 1/1. Functionally, multifunctional enzyme that catalyzes the SAM-dependent methylations of uroporphyrinogen III at position C-2 and C-7 to form precorrin-2 via precorrin-1. Then it catalyzes the NAD-dependent ring dehydrogenation of precorrin-2 to yield sirohydrochlorin. Finally, it catalyzes the ferrochelation of sirohydrochlorin to yield siroheme. The chain is Siroheme synthase 2 from Pectobacterium atrosepticum (strain SCRI 1043 / ATCC BAA-672) (Erwinia carotovora subsp. atroseptica).